The sequence spans 248 residues: 3-deoxy-manno-octulosonate cytidylyltransferase (248 aa).

Belongs to the KdsB family.

The protein localises to the cytoplasm. It catalyses the reaction 3-deoxy-alpha-D-manno-oct-2-ulosonate + CTP = CMP-3-deoxy-beta-D-manno-octulosonate + diphosphate. It functions in the pathway nucleotide-sugar biosynthesis; CMP-3-deoxy-D-manno-octulosonate biosynthesis; CMP-3-deoxy-D-manno-octulosonate from 3-deoxy-D-manno-octulosonate and CTP: step 1/1. It participates in bacterial outer membrane biogenesis; lipopolysaccharide biosynthesis. In terms of biological role, activates KDO (a required 8-carbon sugar) for incorporation into bacterial lipopolysaccharide in Gram-negative bacteria. This Cronobacter sakazakii (strain ATCC BAA-894) (Enterobacter sakazakii) protein is 3-deoxy-manno-octulosonate cytidylyltransferase.